Reading from the N-terminus, the 293-residue chain is Probable 2-(5''-triphosphoribosyl)-3'-dephosphocoenzyme-A synthase (293 aa).

Belongs to the CitG/MdcB family.

The catalysed reaction is 3'-dephospho-CoA + ATP = 2'-(5''-triphospho-alpha-D-ribosyl)-3'-dephospho-CoA + adenine. Functionally, involved in the formation of 2-(5''-phosphoribosyl)-3'-dephosphocoenzyme-A, the prosthetic group of the acyl-carrier protein of the malonate decarboxylase. In Pseudomonas aeruginosa (strain UCBPP-PA14), this protein is Probable 2-(5''-triphosphoribosyl)-3'-dephosphocoenzyme-A synthase.